Reading from the N-terminus, the 167-residue chain is Leptin (167 aa).

The first 21 residues, Met-1–Ala-21, serve as a signal peptide directing secretion. Residues Cys-117 and Cys-167 are joined by a disulfide bond.

Belongs to the leptin family.

Its subcellular location is the secreted. Key player in the regulation of energy balance and body weight control. Once released into the circulation, has central and peripheral effects by binding LEPR, found in many tissues, which results in the activation of several major signaling pathways. In the hypothalamus, acts as an appetite-regulating factor that induces a decrease in food intake and an increase in energy consumption by inducing anorexinogenic factors and suppressing orexigenic neuropeptides, also regulates bone mass and secretion of hypothalamo-pituitary-adrenal hormones. In the periphery, increases basal metabolism, influences reproductive function, regulates pancreatic beta-cell function and insulin secretion, is pro-angiogenic for endothelial cell and affects innate and adaptive immunity. In the arcuate nucleus of the hypothalamus, activates by depolarization POMC neurons inducing FOS and SOCS3 expression to release anorexigenic peptides and inhibits by hyperpolarization NPY neurons inducing SOCS3 with a consequent reduction on release of orexigenic peptides. In addition to its known satiety inducing effect, has a modulatory role in nutrient absorption. In the intestine, reduces glucose absorption by enterocytes by activating PKC and leading to a sequential activation of p38, PI3K and ERK signaling pathways which exerts an inhibitory effect on glucose absorption. Acts as a growth factor on certain tissues, through the activation of different signaling pathways increases expression of genes involved in cell cycle regulation such as CCND1, via JAK2-STAT3 pathway, or VEGFA, via MAPK1/3 and PI3K-AKT1 pathways. May also play an apoptotic role via JAK2-STAT3 pathway and up-regulation of BIRC5 expression. Pro-angiogenic, has mitogenic activity on vascular endothelial cells and plays a role in matrix remodeling by regulating the expression of matrix metalloproteinases (MMPs) and tissue inhibitors of metalloproteinases (TIMPs). In innate immunity, modulates the activity and function of neutrophils by increasing chemotaxis and the secretion of oxygen radicals. Increases phagocytosis by macrophages and enhances secretion of pro-inflammatory mediators. Increases cytotoxic ability of NK cells. Plays a pro-inflammatory role, in synergy with IL1B, by inducing NOS2 which promotes the production of IL6, IL8 and Prostaglandin E2, through a signaling pathway that involves JAK2, PI3K, MAP2K1/MEK1 and MAPK14/p38. In adaptive immunity, promotes the switch of memory T-cells towards T helper-1 cell immune responses. Increases CD4(+)CD25(-) T-cell proliferation and reduces autophagy during TCR (T-cell receptor) stimulation, through MTOR signaling pathway activation and BCL2 up-regulation. In Bubalus bubalis (Domestic water buffalo), this protein is Leptin (LEP).